The primary structure comprises 3856 residues: Serine/threonine-protein kinase ATM (3856 aa).

One can recognise a PWWP domain in the interval 108 to 162 (VGNLVWVMTKYKKWWPGEVVDFKADAKESFMVRSIGQSHLVSWFASSKLKPFKES). Residues 648–681 (GIPDLNGTNTEPTLVLPQVEPTQRRRRRKKEESP) form a disordered region. An FAT domain is found at 2727-3393 (VVAGSAVVCG…ILQLLALANG (667 aa)). A Bipartite nuclear localization signal motif is present at residues 3233-3249 (RKHKTKELEVFIKRFKS). In terms of domain architecture, PI3K/PI4K catalytic spans 3499–3811 (LSDSVTVMNG…GNKDATRALM (313 aa)). The segment at 3505 to 3511 (VMNGINA) is G-loop. The interval 3678–3686 (GLGDRHAMN) is catalytic loop. Residues 3698 to 3722 (HIDLGVAFEQGLMLKTPERVPFRLT) form an activation loop region. Positions 3824–3856 (EMRSIHGQAQQLIQDAIDTDRLSHMFPGWGAWM) constitute an FATC domain.

Belongs to the PI3/PI4-kinase family. Interacts with RUG3. In terms of tissue distribution, ubiquitously expressed at low levels with slightly higher levels in flower buds.

The protein localises to the nucleus. It carries out the reaction L-seryl-[protein] + ATP = O-phospho-L-seryl-[protein] + ADP + H(+). It catalyses the reaction L-threonyl-[protein] + ATP = O-phospho-L-threonyl-[protein] + ADP + H(+). Functionally, serine/threonine protein kinase which activates checkpoint signaling upon genotoxic stresses such as ionizing radiation (IR) or DNA replication stalling. Plays a central role in the perception and response to both stress-induced damage in somatic cells and developmentally programmed DNA damage during meiosis. Recognizes the substrate consensus sequence [ST]-Q. Phosphorylates histone variant H2AX to form H2AXS139ph at double strand breaks (DSBs), thereby regulating DNA damage response mechanism. Involved in transcriptional regulation of RAD51, PARP1, GR1, and LIG4 in response to DNA double strand breaks. Plays a dual role by activating the DNA damage response at dysfunctional telomeres and yet preventing this activation at functional telomeres. Not required for telomere length homeostasis. Regulates DNA damage response (DDR) synergistically with RUG3. Together with RUG3, involved in the splicing of the ND2/NAD2 mRNA. The sequence is that of Serine/threonine-protein kinase ATM from Arabidopsis thaliana (Mouse-ear cress).